The following is a 521-amino-acid chain: Serine/threonine-protein kinase A (521 aa).

The Protein kinase domain maps to Tyr-15 to Ile-289. ATP is bound by residues Val-21 to Val-29 and Lys-45. Asp-148 acts as the Proton acceptor in catalysis.

This sequence belongs to the protein kinase superfamily. Ser/Thr protein kinase family. In terms of processing, autophosphorylated.

The enzyme catalyses L-seryl-[protein] + ATP = O-phospho-L-seryl-[protein] + ADP + H(+). It carries out the reaction L-threonyl-[protein] + ATP = O-phospho-L-threonyl-[protein] + ADP + H(+). In terms of biological role, protein kinase that regulates cellular motility via phosphorylation of membrane proteins. The chain is Serine/threonine-protein kinase A (spkA) from Synechocystis sp. (strain ATCC 27184 / PCC 6803 / Kazusa).